A 235-amino-acid chain; its full sequence is Putative cobalt transport protein CbiM 2 (235 aa).

A run of 7 helical transmembrane segments spans residues 8-28 (LPAI…AYGV), 40-60 (GILP…SLKM), 74-94 (GIGA…IVLI), 107-127 (TLGA…YLIY), 135-155 (LNFY…TYIV), 160-180 (LALA…SSFS), and 185-205 (IFAI…ALLF).

It belongs to the CbiM family. In terms of assembly, forms an energy-coupling factor (ECF) transporter complex composed of an ATP-binding protein (A component, CbiO), a transmembrane protein (T component, CbiQ) and 2 possible substrate-capture proteins (S components, CbiM and CbiN) of unknown stoichimetry.

The protein resides in the cell membrane. It functions in the pathway cofactor biosynthesis; adenosylcobalamin biosynthesis. In terms of biological role, part of the energy-coupling factor (ECF) transporter complex CbiMNOQ involved in cobalt import. This Methanosarcina barkeri (strain Fusaro / DSM 804) protein is Putative cobalt transport protein CbiM 2.